The primary structure comprises 105 residues: Met repressor (105 aa).

The protein belongs to the MetJ family. As to quaternary structure, homodimer.

Its subcellular location is the cytoplasm. In terms of biological role, this regulatory protein, when combined with SAM (S-adenosylmethionine) represses the expression of the methionine regulon and of enzymes involved in SAM synthesis. This is Met repressor from Haemophilus influenzae (strain 86-028NP).